Reading from the N-terminus, the 568-residue chain is Urease subunit alpha (568 aa).

A Urease domain is found at 130-568 (GGIDTHIHFI…LPMAQRYFLF (439 aa)). Ni(2+) is bound by residues histidine 135, histidine 137, and lysine 218. Lysine 218 is modified (N6-carboxylysine). Histidine 220 is a binding site for substrate. Ni(2+) contacts are provided by histidine 247 and histidine 273. The active-site Proton donor is the histidine 321. Residue aspartate 361 participates in Ni(2+) binding.

Belongs to the metallo-dependent hydrolases superfamily. Urease alpha subunit family. In terms of assembly, heterotrimer of UreA (gamma), UreB (beta) and UreC (alpha) subunits. Three heterotrimers associate to form the active enzyme. The cofactor is Ni cation. Post-translationally, carboxylation allows a single lysine to coordinate two nickel ions.

It localises to the cytoplasm. It catalyses the reaction urea + 2 H2O + H(+) = hydrogencarbonate + 2 NH4(+). The protein operates within nitrogen metabolism; urea degradation; CO(2) and NH(3) from urea (urease route): step 1/1. This is Urease subunit alpha from Burkholderia multivorans (strain ATCC 17616 / 249).